A 558-amino-acid polypeptide reads, in one-letter code: Ankyrin repeat protein OPG189 (558 aa).

7 ANK repeats span residues 65-95 (YGEN…NINK), 169-205 (YGCT…DVDK), 209-239 (HGNT…NIDS), 243-272 (NGYT…NVNT), 276-304 (FGTT…ELEI), 339-368 (YNET…DFET), and 372-401 (SGCT…SLKI).

Belongs to the orthopoxvirus OPG189 protein family.

Contributes to viral release without involving rearrangement of host actin. This is Ankyrin repeat protein OPG189 (OPG189) from Homo sapiens (Human).